The chain runs to 262 residues: 3-deoxy-manno-octulosonate cytidylyltransferase (262 aa).

It belongs to the KdsB family.

The protein localises to the cytoplasm. It carries out the reaction 3-deoxy-alpha-D-manno-oct-2-ulosonate + CTP = CMP-3-deoxy-beta-D-manno-octulosonate + diphosphate. It functions in the pathway nucleotide-sugar biosynthesis; CMP-3-deoxy-D-manno-octulosonate biosynthesis; CMP-3-deoxy-D-manno-octulosonate from 3-deoxy-D-manno-octulosonate and CTP: step 1/1. The protein operates within bacterial outer membrane biogenesis; lipopolysaccharide biosynthesis. Its function is as follows. Activates KDO (a required 8-carbon sugar) for incorporation into bacterial lipopolysaccharide in Gram-negative bacteria. The protein is 3-deoxy-manno-octulosonate cytidylyltransferase of Acidovorax sp. (strain JS42).